Here is a 442-residue protein sequence, read N- to C-terminus: D-serine dehydratase (442 aa).

Lysine 118 bears the N6-(pyridoxal phosphate)lysine mark.

It belongs to the serine/threonine dehydratase family. DsdA subfamily. In terms of assembly, monomer. The cofactor is pyridoxal 5'-phosphate.

It carries out the reaction D-serine = pyruvate + NH4(+). In Escherichia coli (strain K12 / MC4100 / BW2952), this protein is D-serine dehydratase.